Consider the following 294-residue polypeptide: Maltose/maltodextrin import ATP-binding protein MalK (294 aa).

Residues 4 to 233 (VQLRNVTKAW…PADRFVAGFI (230 aa)) form the ABC transporter domain. 36–43 (GPSGCGKS) lines the ATP pocket.

The protein belongs to the ABC transporter superfamily. Maltooligosaccharide importer (TC 3.A.1.1.1) family. The complex is composed of two ATP-binding proteins (MalK), two transmembrane proteins (MalG and MalK) and a solute-binding protein (MalE).

It localises to the cell inner membrane. It catalyses the reaction D-maltose(out) + ATP + H2O = D-maltose(in) + ADP + phosphate + H(+). In terms of biological role, part of the ABC transporter complex MalEFGK involved in maltose/maltodextrin import. Responsible for energy coupling to the transport system. The sequence is that of Maltose/maltodextrin import ATP-binding protein MalK from Klebsiella aerogenes (Enterobacter aerogenes).